Consider the following 349-residue polypeptide: Isopentenyl-diphosphate delta-isomerase (349 aa).

Substrate is bound at residue 6 to 7 (RK). FMN is bound by residues 62–64 (AMT), S93, and N122. Q152 contacts substrate. A Mg(2+)-binding site is contributed by E153. FMN-binding positions include K184, T214, 258–259 (GG), and 280–281 (AG).

This sequence belongs to the IPP isomerase type 2 family. As to quaternary structure, homooctamer. Dimer of tetramers. It depends on FMN as a cofactor. The cofactor is NADPH. Mg(2+) is required as a cofactor.

It is found in the cytoplasm. It catalyses the reaction isopentenyl diphosphate = dimethylallyl diphosphate. Its function is as follows. Involved in the biosynthesis of isoprenoids. Catalyzes the 1,3-allylic rearrangement of the homoallylic substrate isopentenyl (IPP) to its allylic isomer, dimethylallyl diphosphate (DMAPP). This Bacillus subtilis (strain 168) protein is Isopentenyl-diphosphate delta-isomerase.